Here is a 324-residue protein sequence, read N- to C-terminus: Glutamyl-Q tRNA(Asp) synthetase (324 aa).

L-glutamate is bound by residues 5 to 9 and E41; that span reads RLAPS. The short motif at 8–18 is the 'HIGH' region element; that stretch reads PSPTGNIHLGN. 4 residues coordinate Zn(2+): C105, C107, Y128, and C132. L-glutamate-binding residues include Y193 and R211. The 'KMSKS' region motif lies at 249–253; it reads RLAKR. K252 contributes to the ATP binding site.

This sequence belongs to the class-I aminoacyl-tRNA synthetase family. GluQ subfamily. Zn(2+) serves as cofactor.

Catalyzes the tRNA-independent activation of glutamate in presence of ATP and the subsequent transfer of glutamate onto a tRNA(Asp). Glutamate is transferred on the 2-amino-5-(4,5-dihydroxy-2-cyclopenten-1-yl) moiety of the queuosine in the wobble position of the QUC anticodon. The sequence is that of Glutamyl-Q tRNA(Asp) synthetase from Nitratidesulfovibrio vulgaris (strain ATCC 29579 / DSM 644 / CCUG 34227 / NCIMB 8303 / VKM B-1760 / Hildenborough) (Desulfovibrio vulgaris).